A 442-amino-acid chain; its full sequence is GTPase Obg (442 aa).

The Obg domain occupies 1–158; the sequence is MFYDQARIFV…HWLELELKLL (158 aa). In terms of domain architecture, OBG-type G spans 159 to 329; sequence ADVGLVGFPN…LIYHVHKGLE (171 aa). Residues 165–172, 190–194, 212–215, 282–285, and 310–312 contribute to the GTP site; these read GFPNVGKS, FTTLE, DIPG, NKMD, and SAA. Residues Ser-172 and Thr-192 each coordinate Mg(2+). The OCT domain maps to 349 to 427; the sequence is FTGKTEERFK…IGDLDFDFIE (79 aa).

It belongs to the TRAFAC class OBG-HflX-like GTPase superfamily. OBG GTPase family. In terms of assembly, monomer. Requires Mg(2+) as cofactor.

Its subcellular location is the cytoplasm. An essential GTPase which binds GTP, GDP and possibly (p)ppGpp with moderate affinity, with high nucleotide exchange rates and a fairly low GTP hydrolysis rate. Plays a role in control of the cell cycle, stress response, ribosome biogenesis and in those bacteria that undergo differentiation, in morphogenesis control. The sequence is that of GTPase Obg from Heliobacterium modesticaldum (strain ATCC 51547 / Ice1).